Consider the following 198-residue polypeptide: Pyridoxal 5'-phosphate synthase subunit PdxT (198 aa).

49 to 51 (GES) lines the L-glutamine pocket. Residue Cys-81 is the Nucleophile of the active site. Residues Arg-113 and 141 to 142 (IR) each bind L-glutamine. Active-site charge relay system residues include His-177 and Glu-179.

Belongs to the glutaminase PdxT/SNO family. In terms of assembly, in the presence of PdxS, forms a dodecamer of heterodimers. Only shows activity in the heterodimer.

The enzyme catalyses aldehydo-D-ribose 5-phosphate + D-glyceraldehyde 3-phosphate + L-glutamine = pyridoxal 5'-phosphate + L-glutamate + phosphate + 3 H2O + H(+). The catalysed reaction is L-glutamine + H2O = L-glutamate + NH4(+). Its pathway is cofactor biosynthesis; pyridoxal 5'-phosphate biosynthesis. Functionally, catalyzes the hydrolysis of glutamine to glutamate and ammonia as part of the biosynthesis of pyridoxal 5'-phosphate. The resulting ammonia molecule is channeled to the active site of PdxS. This is Pyridoxal 5'-phosphate synthase subunit PdxT from Mycobacterium ulcerans (strain Agy99).